The following is a 101-amino-acid chain: Small ribosomal subunit protein uS14 (101 aa).

This sequence belongs to the universal ribosomal protein uS14 family. Part of the 30S ribosomal subunit. Contacts proteins S3 and S10.

Its function is as follows. Binds 16S rRNA, required for the assembly of 30S particles and may also be responsible for determining the conformation of the 16S rRNA at the A site. This chain is Small ribosomal subunit protein uS14, found in Brucella anthropi (strain ATCC 49188 / DSM 6882 / CCUG 24695 / JCM 21032 / LMG 3331 / NBRC 15819 / NCTC 12168 / Alc 37) (Ochrobactrum anthropi).